Reading from the N-terminus, the 239-residue chain is Glucosamine-6-phosphate deaminase (239 aa).

Aspartate 62 (proton acceptor; for enolization step) is an active-site residue. Catalysis depends on asparagine 128, which acts as the For ring-opening step. Residue histidine 130 is the Proton acceptor; for ring-opening step of the active site. Residue glutamate 135 is the For ring-opening step of the active site.

This sequence belongs to the glucosamine/galactosamine-6-phosphate isomerase family. NagB subfamily.

The catalysed reaction is alpha-D-glucosamine 6-phosphate + H2O = beta-D-fructose 6-phosphate + NH4(+). It functions in the pathway amino-sugar metabolism; N-acetylneuraminate degradation; D-fructose 6-phosphate from N-acetylneuraminate: step 5/5. Functionally, catalyzes the reversible isomerization-deamination of glucosamine 6-phosphate (GlcN6P) to form fructose 6-phosphate (Fru6P) and ammonium ion. In Lactobacillus johnsonii (strain CNCM I-12250 / La1 / NCC 533), this protein is Glucosamine-6-phosphate deaminase.